Consider the following 187-residue polypeptide: Large ribosomal subunit protein uL5 (187 aa).

This sequence belongs to the universal ribosomal protein uL5 family. Part of the 50S ribosomal subunit; part of the 5S rRNA/L5/L18/L25 subcomplex. Contacts the 5S rRNA and the P site tRNA. Forms a bridge to the 30S subunit in the 70S ribosome.

Functionally, this is one of the proteins that bind and probably mediate the attachment of the 5S RNA into the large ribosomal subunit, where it forms part of the central protuberance. In the 70S ribosome it contacts protein S13 of the 30S subunit (bridge B1b), connecting the 2 subunits; this bridge is implicated in subunit movement. Contacts the P site tRNA; the 5S rRNA and some of its associated proteins might help stabilize positioning of ribosome-bound tRNAs. The polypeptide is Large ribosomal subunit protein uL5 (Mycobacterium avium (strain 104)).